The chain runs to 306 residues: Large ribosomal subunit protein mL45 (306 aa).

This sequence belongs to the mitochondrion-specific ribosomal protein mL45 family. As to quaternary structure, component of the mitochondrial ribosome large subunit (39S) which comprises a 16S rRNA and about 50 distinct proteins.

It is found in the mitochondrion. Its function is as follows. Component of the mitochondrial large ribosomal subunit (mt-LSU). Within the mitochondrial ribosomes, required to direct the nascent polypeptide toward the tunnel exit and position the exit at a distance from the membrane surface. This Bos taurus (Bovine) protein is Large ribosomal subunit protein mL45 (MRPL45).